Here is a 641-residue protein sequence, read N- to C-terminus: Macrolide export ATP-binding/permease protein MacB (641 aa).

The ABC transporter domain occupies 2–236 (IFLKNICKNI…LTLKTMSKEK (235 aa)). 34 to 41 (GQSGSGKT) contacts ATP. The next 4 membrane-spanning stretches (helical) occupy residues 265–285 (ILTM…VALG), 519–539 (ACVA…IMLV), 571–591 (MICT…IFAF), and 604–624 (AYSV…FGFF).

It belongs to the ABC transporter superfamily. Macrolide exporter (TC 3.A.1.122) family. As to quaternary structure, homodimer.

The protein resides in the cell inner membrane. Functionally, non-canonical ABC transporter that contains transmembrane domains (TMD), which form a pore in the inner membrane, and an ATP-binding domain (NBD), which is responsible for energy generation. Confers resistance against macrolides. The sequence is that of Macrolide export ATP-binding/permease protein MacB from Campylobacter jejuni subsp. jejuni serotype O:23/36 (strain 81-176).